Consider the following 116-residue polypeptide: MSRFKKIKGDEGESIASDFLISIGHEILKRNYRFLYCEIDIISIKEEVLYFSEVKFWKEFESFDPRFTFNFAKQTRMRKAASGFLSENLSLQNHFVSFCLVSINEKKGCEYYPDLF.

It belongs to the UPF0102 family.

This is UPF0102 protein LBJ_1427 from Leptospira borgpetersenii serovar Hardjo-bovis (strain JB197).